Reading from the N-terminus, the 414-residue chain is Argininosuccinate synthase (414 aa).

Residues 15-23 (AYSGGLDTS) and Ala42 each bind ATP. The L-citrulline site is built by Tyr93 and Ser98. An ATP-binding site is contributed by Gly123. Thr125, Asn129, and Asp130 together coordinate L-aspartate. Asn129 contributes to the L-citrulline binding site. Positions 133, 182, 191, 267, and 279 each coordinate L-citrulline.

It belongs to the argininosuccinate synthase family. Type 1 subfamily. In terms of assembly, homotetramer.

It localises to the cytoplasm. The catalysed reaction is L-citrulline + L-aspartate + ATP = 2-(N(omega)-L-arginino)succinate + AMP + diphosphate + H(+). It participates in amino-acid biosynthesis; L-arginine biosynthesis; L-arginine from L-ornithine and carbamoyl phosphate: step 2/3. This chain is Argininosuccinate synthase, found in Deinococcus geothermalis (strain DSM 11300 / CIP 105573 / AG-3a).